Consider the following 446-residue polypeptide: tRNA modification GTPase MnmE (446 aa).

Residues arginine 24, glutamate 81, and lysine 120 each coordinate (6S)-5-formyl-5,6,7,8-tetrahydrofolate. Positions 216–368 constitute a TrmE-type G domain; sequence GLHAVLIGPP…LHIRLRELAL (153 aa). A K(+)-binding site is contributed by asparagine 226. GTP is bound by residues 226-231, 245-251, and 270-273; these read NAGKSS, TDVAGTT, and DTAG. Serine 230 is a binding site for Mg(2+). Positions 245, 247, and 250 each coordinate K(+). Threonine 251 is a binding site for Mg(2+). Lysine 446 is a binding site for (6S)-5-formyl-5,6,7,8-tetrahydrofolate.

Belongs to the TRAFAC class TrmE-Era-EngA-EngB-Septin-like GTPase superfamily. TrmE GTPase family. Homodimer. Heterotetramer of two MnmE and two MnmG subunits. K(+) serves as cofactor.

It localises to the cytoplasm. In terms of biological role, exhibits a very high intrinsic GTPase hydrolysis rate. Involved in the addition of a carboxymethylaminomethyl (cmnm) group at the wobble position (U34) of certain tRNAs, forming tRNA-cmnm(5)s(2)U34. This Xanthomonas oryzae pv. oryzae (strain PXO99A) protein is tRNA modification GTPase MnmE.